The following is a 330-amino-acid chain: Aspartate--ammonia ligase (330 aa).

Belongs to the class-II aminoacyl-tRNA synthetase family. AsnA subfamily.

The protein resides in the cytoplasm. It catalyses the reaction L-aspartate + NH4(+) + ATP = L-asparagine + AMP + diphosphate + H(+). It participates in amino-acid biosynthesis; L-asparagine biosynthesis; L-asparagine from L-aspartate (ammonia route): step 1/1. This chain is Aspartate--ammonia ligase, found in Streptococcus pyogenes serotype M1.